The following is a 579-amino-acid chain: MSASSLLEQRPKGQGNKVQNGSVHQKDGLNDDDFEPYLSPQARPNNAYTAMSDSYLPSYYSPSIGFSYSLGEAAWSTGGDTAMPYLTSYGQLSNGEPHFLPDAMFGQPGALGSTPFLGQHGFNFFPSGIDFSAWGNNSSQGQSTQSSGYSSNYAYAPSSLGGAMIDGQSAFANETLNKAPGMNTIDQGMAALKLGSTEVASSVPKVVGSAVGSGSITSNIVASSSLPPATIAPPKPASWADIASKPAKQQPKLKTKNGIAGSSLPPPPIKHNMDIGTWDNKGPVAKAPSQALVQNIGQPTQGSPQPVGQQANNSPPVAQASVGQQTQPLPPPPPQPAQLSVQQQAAQPTRWVAPRNRGSGFGHNGVDGNGVGQSQAGSGSTPSEPHPVLEKLRSINNYNPKDFDWNLKHGRVFIIKSYSEDDIHRSIKYNIWCSTEHGNKRLDAAYRSMNGKGPVYLLFSVNGSGHFCGVAEMKSAVDYNTCAGVWSQDKWKGRFDVRWIFVKDVPNSQLRHIRLENNENKPVTNSRDTQEVPLEKAKQVLKIIASYKHTTSIFDDFSHYEKRQEEEESVKKERQGRGK.

A disordered region spans residues 1–45 (MSASSLLEQRPKGQGNKVQNGSVHQKDGLNDDDFEPYLSPQARPN). Ser-2 is subject to N-acetylserine. 6 positions are modified to phosphoserine: Ser-2, Ser-4, Ser-5, Ser-22, Ser-39, and Ser-196. Residues 2–384 (SASSLLEQRP…QAGSGSTPSE (383 aa)) form a localization to mRNA processing bodies (P-bodies) region. A disordered region spans residues 247-387 (AKQQPKLKTK…SGSTPSEPHP (141 aa)). A compositionally biased stretch (polar residues) spans 291 to 316 (ALVQNIGQPTQGSPQPVGQQANNSPP). A compositionally biased stretch (low complexity) spans 337 to 349 (AQLSVQQQAAQPT). Ser-359 bears the Phosphoserine mark. Positions 359 to 371 (SGFGHNGVDGNGV) are enriched in gly residues. A compositionally biased stretch (polar residues) spans 372–383 (GQSQAGSGSTPS). An interaction with m6A-containing mRNAs region spans residues 385–579 (PHPVLEKLRS…VKKERQGRGK (195 aa)). At Ser-394 the chain carries Phosphoserine. In terms of domain architecture, YTH spans 410–544 (GRVFIIKSYS…EKAKQVLKII (135 aa)). RNA-binding positions include 416–418 (KSY), Asp-422, 432–433 (WC), Asn-462, Trp-486, and Trp-491.

The protein belongs to the YTHDF family. YTHDF2 subfamily. As to quaternary structure, interacts with CNOT1; interaction is direct and promotes recruitment of the CCR4-NOT complex. Interacts with YTHDF3. Interacts with RIDA/HRSP12; interaction leads to recruitment of the ribonuclease P/MRP complex. Post-translationally, ubiquitinated by the SCF(SKP2) complex, leading to its degradation. In terms of tissue distribution, widely expressed, with highest expression in testis.

It localises to the cytoplasm. The protein resides in the cytosol. Its subcellular location is the P-body. It is found in the stress granule. The protein localises to the nucleus. In terms of biological role, specifically recognizes and binds N6-methyladenosine (m6A)-containing RNAs, and regulates their stability. M6A is a modification present at internal sites of mRNAs and some non-coding RNAs and plays a role in mRNA stability and processing. Acts as a regulator of mRNA stability by promoting degradation of m6A-containing mRNAs via interaction with the CCR4-NOT and ribonuclease P/MRP complexes, depending on the context. The YTHDF paralogs (YTHDF1, YTHDF2 and YTHDF3) share m6A-containing mRNAs targets and act redundantly to mediate mRNA degradation and cellular differentiation. M6A-containing mRNAs containing a binding site for RIDA/HRSP12 (5'-GGUUC-3') are preferentially degraded by endoribonucleolytic cleavage: cooperative binding of RIDA/HRSP12 and YTHDF2 to transcripts leads to recruitment of the ribonuclease P/MRP complex. Other m6A-containing mRNAs undergo deadenylation via direct interaction between YTHDF2 and CNOT1, leading to recruitment of the CCR4-NOT and subsequent deadenylation of m6A-containing mRNAs. Required maternally to regulate oocyte maturation: probably acts by binding to m6A-containing mRNAs, thereby regulating maternal transcript dosage during oocyte maturation, which is essential for the competence of oocytes to sustain early zygotic development. Also required during spermatogenesis: regulates spermagonial adhesion by promoting degradation of m6A-containing transcripts coding for matrix metallopeptidases. Also involved in hematopoietic stem cells specification by binding to m6A-containing mRNAs, leading to promote their degradation. Also acts as a regulator of neural development by promoting m6A-dependent degradation of neural development-related mRNA targets. Inhibits neural specification of induced pluripotent stem cells by binding to methylated neural-specific mRNAs and promoting their degradation, thereby restraining neural differentiation. Regulates circadian regulation of hepatic lipid metabolism: acts by promoting m6A-dependent degradation of PPARA transcripts. Regulates the innate immune response to infection by inhibiting the type I interferon response: acts by binding to m6A-containing IFNB transcripts and promoting their degradation. May also act as a promoter of cap-independent mRNA translation following heat shock stress: upon stress, relocalizes to the nucleus and specifically binds mRNAs with some m6A methylation mark at their 5'-UTR, protecting demethylation of mRNAs by FTO, thereby promoting cap-independent mRNA translation. Regulates mitotic entry by promoting the phase-specific m6A-dependent degradation of WEE1 transcripts. Promotes formation of phase-separated membraneless compartments, such as P-bodies or stress granules, by undergoing liquid-liquid phase separation upon binding to mRNAs containing multiple m6A-modified residues: polymethylated mRNAs act as a multivalent scaffold for the binding of YTHDF proteins, juxtaposing their disordered regions and thereby leading to phase separation. The resulting mRNA-YTHDF complexes then partition into different endogenous phase-separated membraneless compartments, such as P-bodies, stress granules or neuronal RNA granules. May also recognize and bind RNAs modified by C5-methylcytosine (m5C) and act as a regulator of rRNA processing. The chain is YTH domain-containing family protein 2 from Mus musculus (Mouse).